A 352-amino-acid chain; its full sequence is Thiamine-monophosphate kinase (352 aa).

Residues Asp58, Thr73, and Asp75 each coordinate Mg(2+). His82 lines the substrate pocket. Mg(2+)-binding residues include Asp103 and Asp151. Residues 150–151 (GD) and Arg177 each bind ATP. Asp239 serves as a coordination point for Mg(2+). Ser241 is a binding site for ATP. Residue Asp242 participates in Mg(2+) binding. Substrate-binding residues include Asp294 and Trp349.

This sequence belongs to the thiamine-monophosphate kinase family.

It carries out the reaction thiamine phosphate + ATP = thiamine diphosphate + ADP. The protein operates within cofactor biosynthesis; thiamine diphosphate biosynthesis; thiamine diphosphate from thiamine phosphate: step 1/1. Functionally, catalyzes the ATP-dependent phosphorylation of thiamine-monophosphate (TMP) to form thiamine-pyrophosphate (TPP), the active form of vitamin B1. The sequence is that of Thiamine-monophosphate kinase from Caulobacter vibrioides (strain ATCC 19089 / CIP 103742 / CB 15) (Caulobacter crescentus).